A 113-amino-acid chain; its full sequence is Hydrogenase maturation factor HypA (113 aa).

His2 is a binding site for Ni(2+). Cys73, Cys76, Cys89, and Cys92 together coordinate Zn(2+).

Belongs to the HypA/HybF family.

Involved in the maturation of [NiFe] hydrogenases. Required for nickel insertion into the metal center of the hydrogenase. The protein is Hydrogenase maturation factor HypA of Rhodobacter capsulatus (Rhodopseudomonas capsulata).